We begin with the raw amino-acid sequence, 343 residues long: Biotin synthase 2 (343 aa).

One can recognise a Radical SAM core domain in the interval 58-285 (NEVQLSTLLS…LTMVRLSAGR (228 aa)). Positions 73, 77, and 80 each coordinate [4Fe-4S] cluster. 4 residues coordinate [2Fe-2S] cluster: Cys117, Cys148, Cys208, and Arg280.

The protein belongs to the radical SAM superfamily. Biotin synthase family. In terms of assembly, homodimer. The cofactor is [4Fe-4S] cluster. [2Fe-2S] cluster is required as a cofactor.

It carries out the reaction (4R,5S)-dethiobiotin + (sulfur carrier)-SH + 2 reduced [2Fe-2S]-[ferredoxin] + 2 S-adenosyl-L-methionine = (sulfur carrier)-H + biotin + 2 5'-deoxyadenosine + 2 L-methionine + 2 oxidized [2Fe-2S]-[ferredoxin]. It participates in cofactor biosynthesis; biotin biosynthesis; biotin from 7,8-diaminononanoate: step 2/2. Functionally, catalyzes the conversion of dethiobiotin (DTB) to biotin by the insertion of a sulfur atom into dethiobiotin via a radical-based mechanism. This is Biotin synthase 2 from Polaromonas sp. (strain JS666 / ATCC BAA-500).